A 68-amino-acid polypeptide reads, in one-letter code: MKAEELRKLTDDELKDKLTELKKKLMNLRFQNAVGGLEKPSEIKATKRDIARILTILRERELSKAGGE.

It belongs to the universal ribosomal protein uL29 family.

In Persephonella marina (strain DSM 14350 / EX-H1), this protein is Large ribosomal subunit protein uL29.